Here is a 239-residue protein sequence, read N- to C-terminus: Heptaprenylglyceryl phosphate synthase (239 aa).

Lys12 lines the sn-glycerol 1-phosphate pocket. Positions 14 and 40 each coordinate Mg(2+). Residues 159 to 164 (YLEYSG), Gly189, and 209 to 210 (GN) contribute to the sn-glycerol 1-phosphate site.

This sequence belongs to the GGGP/HepGP synthase family. Group I subfamily. As to quaternary structure, homodimer. Mg(2+) serves as cofactor.

It catalyses the reaction sn-glycerol 1-phosphate + all-trans-heptaprenyl diphosphate = 3-heptaprenyl-sn-glycero-1-phosphate + diphosphate. Its pathway is membrane lipid metabolism; glycerophospholipid metabolism. In terms of biological role, prenyltransferase that catalyzes in vivo the transfer of the heptaprenyl moiety of heptaprenyl pyrophosphate (HepPP; 35 carbon atoms) to the C3 hydroxyl of sn-glycerol-1-phosphate (G1P), producing heptaprenylglyceryl phosphate (HepGP). This reaction is an ether-bond-formation step in the biosynthesis of archaea-type G1P-based membrane lipids found in Bacillales. This Geobacillus thermodenitrificans (strain NG80-2) protein is Heptaprenylglyceryl phosphate synthase.